The chain runs to 348 residues: tRNA N6-adenosine threonylcarbamoyltransferase (348 aa).

H115 and H119 together coordinate Fe cation. Substrate is bound by residues 137-141 (LASGG), D170, G183, and N281. A Fe cation-binding site is contributed by D309.

This sequence belongs to the KAE1 / TsaD family. Fe(2+) is required as a cofactor.

The protein resides in the cytoplasm. It carries out the reaction L-threonylcarbamoyladenylate + adenosine(37) in tRNA = N(6)-L-threonylcarbamoyladenosine(37) in tRNA + AMP + H(+). Functionally, required for the formation of a threonylcarbamoyl group on adenosine at position 37 (t(6)A37) in tRNAs that read codons beginning with adenine. Is involved in the transfer of the threonylcarbamoyl moiety of threonylcarbamoyl-AMP (TC-AMP) to the N6 group of A37, together with TsaE and TsaB. TsaD likely plays a direct catalytic role in this reaction. The protein is tRNA N6-adenosine threonylcarbamoyltransferase of Methylobacterium sp. (strain 4-46).